The primary structure comprises 948 residues: Zinc finger CCCH domain-containing protein 18 (948 aa).

Position 1 is an N-acetylmethionine (M1). The tract at residues 1–219 is disordered; the sequence is MDVAESPELD…SDRKVRPRPT (219 aa). S6 bears the Phosphoserine mark. Residues 15 to 25 are compositionally biased toward acidic residues; sequence EDEEQPALSDD. A phosphoserine mark is found at S33, S45, S58, S64, S71, S75, S80, and S92. The segment covering 70–86 has biased composition (basic and acidic residues); it reads ASEPKSQDQDSEAHELS. The segment covering 95 to 105 has biased composition (acidic residues); sequence EEGDDVEEDGT. T105 is subject to Phosphothreonine. Phosphoserine occurs at positions 106 and 114. A compositionally biased stretch (basic and acidic residues) spans 106-120; it reads SDLRDEASSVTRELD. 2 stretches are compositionally biased toward acidic residues: residues 121-132 and 139-154; these read EHELDYDEEVPE and QEEEAEKAGAEEEEEK. The residue at position 169 (S169) is a Phosphoserine. The span at 177–186 shows a compositional bias: basic and acidic residues; that stretch reads EAAKEKKKED. Residues 187-203 show a composition bias toward acidic residues; it reads DDGEIDDGEIDDDDLEE. The span at 204-213 shows a compositional bias: basic and acidic residues; that stretch reads GEVKDPSDRK. A C3H1-type zinc finger spans residues 215–241; it reads RPRPTCRFFMKGNCTWGMSCRFIHPGV. The residue at position 245 (G245) is an Omega-N-methylarginine. 2 disordered regions span residues 272–296 and 388–922; these read ANPWGGPVVDEILPPPPPEPPTESA and YTEA…TLSR. The segment covering 392 to 480 has biased composition (basic and acidic residues); that stretch reads EPYHNYRERE…DREKDKEKPK (89 aa). The stretch at 395 to 460 forms a coiled coil; it reads HNYRERERER…RERAKRDEKD (66 aa). Position 483 is a phosphoserine (S483). K506 is covalently cross-linked (Glycyl lysine isopeptide (Lys-Gly) (interchain with G-Cter in SUMO2)). Residues 506–516 are compositionally biased toward basic and acidic residues; the sequence is KRADEWKDPWR. A phosphoserine mark is found at S528, S530, and S532. Over residues 541–602 the composition is skewed to low complexity; sequence SASSASASNS…SRSRSFSSSP (62 aa). Over residues 603–612 the composition is skewed to pro residues; it reads SPSPTPSPHR. Glycyl lysine isopeptide (Lys-Gly) (interchain with G-Cter in SUMO2) cross-links involve residues K618 and K657. The segment covering 657-666 has biased composition (basic and acidic residues); sequence KPGDLREARR. 2 stretches are compositionally biased toward low complexity: residues 688 to 721 and 732 to 746; these read GSSYSGSSSRSRSLSVSSVSSVSSATSSSSSVHS and ASPVSSASSRSPTPA. Residues 756–770 are compositionally biased toward basic and acidic residues; that stretch reads KKEDGVREEKRRRDP. Positions 774-804 are enriched in low complexity; the sequence is PPKSSKAPAGGKASQQAAAPQPAVPGQPQQG. K810 is modified (N6-acetyllysine). Residue K813 forms a Glycyl lysine isopeptide (Lys-Gly) (interchain with G-Cter in SUMO2) linkage. Residues 820–837 show a composition bias toward basic and acidic residues; the sequence is AADKGSRKRYEPSDKDRQ. 5 positions are modified to phosphoserine: S838, S847, S863, S888, and S891. Polar residues predominate over residues 888-898; the sequence is SPQSKGSSKVT. The span at 902 to 919 shows a compositional bias: low complexity; the sequence is GKATDTATAGTKSGKAST. K903 is covalently cross-linked (Glycyl lysine isopeptide (Lys-Gly) (interchain with G-Cter in SUMO2)). Positions 916–945 form a coiled coil; it reads KASTLSRREELLKQLKAVEDAIARKRAKIP.

In terms of assembly, interacts with ZFC3H1 in a RNase-insensitive manner.

It localises to the nucleus. The sequence is that of Zinc finger CCCH domain-containing protein 18 (Zc3h18) from Mus musculus (Mouse).